The chain runs to 285 residues: Bifunctional protein FolD (285 aa).

NADP(+)-binding positions include 166–168 and Ile-232; that span reads GAS.

The protein belongs to the tetrahydrofolate dehydrogenase/cyclohydrolase family. Homodimer.

The catalysed reaction is (6R)-5,10-methylene-5,6,7,8-tetrahydrofolate + NADP(+) = (6R)-5,10-methenyltetrahydrofolate + NADPH. It catalyses the reaction (6R)-5,10-methenyltetrahydrofolate + H2O = (6R)-10-formyltetrahydrofolate + H(+). It functions in the pathway one-carbon metabolism; tetrahydrofolate interconversion. Catalyzes the oxidation of 5,10-methylenetetrahydrofolate to 5,10-methenyltetrahydrofolate and then the hydrolysis of 5,10-methenyltetrahydrofolate to 10-formyltetrahydrofolate. In Psychromonas ingrahamii (strain DSM 17664 / CCUG 51855 / 37), this protein is Bifunctional protein FolD.